The following is a 1254-amino-acid chain: Receptor tyrosine-protein kinase erbB-2 (1254 aa).

The N-terminal stretch at 1-22 (MELAAWCGWGLLLALLSPGASG) is a signal peptide. Topologically, residues 23-652 (TQVCTGTDMK…PAEQRASPAT (630 aa)) are extracellular. An intrachain disulfide couples Cys-26 to Cys-53. N-linked (GlcNAc...) asparagine glycosylation is found at Asn-68, Asn-125, and Asn-187. 14 cysteine pairs are disulfide-bonded: Cys-162-Cys-192, Cys-195-Cys-204, Cys-199-Cys-212, Cys-236-Cys-244, Cys-240-Cys-252, Cys-255-Cys-264, Cys-268-Cys-295, Cys-299-Cys-311, Cys-315-Cys-331, Cys-334-Cys-338, Cys-342-Cys-367, Cys-475-Cys-504, Cys-511-Cys-520, and Cys-515-Cys-528. Residue Asn-259 is glycosylated (N-linked (GlcNAc...) asparagine). Asn-530 carries an N-linked (GlcNAc...) asparagine glycan. Intrachain disulfides connect Cys-531–Cys-540, Cys-544–Cys-560, Cys-563–Cys-576, Cys-567–Cys-584, Cys-587–Cys-596, Cys-600–Cys-623, Cys-626–Cys-634, and Cys-630–Cys-642. Residue Asn-571 is glycosylated (N-linked (GlcNAc...) asparagine). N-linked (GlcNAc...) asparagine glycosylation is present at Asn-629. The helical transmembrane segment at 653–675 (SIIATVVGILLFLVIGVVVGILI) threads the bilayer. The segment at 676 to 689 (KRRRQKIRKYTMRR) is required for interaction with KPNB1 and EEA1. Residues 676–689 (KRRRQKIRKYTMRR) carry the Nuclear localization signal motif. At 676–1254 (KRRRQKIRKY…PEYLGLDVPV (579 aa)) the chain is on the cytoplasmic side. Residues 720–987 (LRKVKVLGSG…RMARDPQRFV (268 aa)) form the Protein kinase domain. ATP is bound by residues 726–734 (LGSGAFGTV) and Lys-753. Asp-845 acts as the Proton acceptor in catalysis. Phosphotyrosine is present on Tyr-877. 2 disordered regions span residues 1029–1116 (GFFF…SEDP) and 1133–1179 (CSPQ…GKNG). Residues Ser-1054, Ser-1078, Ser-1083, and Ser-1107 each carry the phosphoserine modification. Tyr-1112 is subject to Phosphotyrosine. Residue Tyr-1139 is modified to Phosphotyrosine; by autocatalysis. A compositionally biased stretch (pro residues) spans 1146–1161 (RPQPPLTPEGPLPPVR). Phosphothreonine is present on Thr-1166. An interaction with PIK3C2B region spans residues 1195–1197 (EYL). Position 1196 is a phosphotyrosine (Tyr-1196). The interval 1223-1254 (DQDPSERGSPPNTFEGTPTAENPEYLGLDVPV) is disordered. A compositionally biased stretch (polar residues) spans 1232-1242 (PPNTFEGTPTA). Tyr-1247 carries the post-translational modification Phosphotyrosine; by autocatalysis.

Belongs to the protein kinase superfamily. Tyr protein kinase family. EGF receptor subfamily. In terms of assembly, homodimer. Heterodimer with EGFR, ERBB3 and ERBB4. Part of a complex with EGFR and either PIK3C2A or PIK3C2B. May interact with PIK3C2B when phosphorylated on Tyr-1196. Interacts with PRKCABP and PLXNB1. Interacts (when phosphorylated on Tyr-1247) with MEMO. Interacts with MUC1. Interacts (when phosphorylated on Tyr-1139) with GRB7 (via SH2 domain). Interacts (when phosphorylated on Tyr-1247) with ERBIN. Interacts with SRC, KPNB1, RANBP2, EEA1, CRM1, CLTC, PTK6, RPA194, MYOC and ACTB. Interacts (preferentially with the tyrosine phosphorylated form) with CPNE3; this interaction occurs at the cell membrane and is increased in a growth factor heregulin-dependent manner. Interacts with HSP90AA1 and HSP90AB1 in an ATP-dependent manner; the interaction suppresses ERBB2 kinase activity. Interacts with SORL1; this interaction regulates ERBB2 subcellular distribution by promoting its recycling after internalization from endosomes back to the plasma membrane, hence stimulates ERBB2-mediated signaling. Interacts with SH3BGRL. Interacts with ROR1. Post-translationally, autophosphorylated. Autophosphorylation occurs in trans, i.e. one subunit of the dimeric receptor phosphorylates tyrosine residues on the other subunit. Ligand-binding increases phosphorylation on tyrosine residues. Signaling via SEMA4C promotes phosphorylation at Tyr-1247. Dephosphorylated by PTPN12.

The protein localises to the cell membrane. It is found in the cell projection. Its subcellular location is the ruffle membrane. It localises to the early endosome. The protein resides in the cytoplasm. The protein localises to the perinuclear region. It is found in the nucleus. It carries out the reaction L-tyrosyl-[protein] + ATP = O-phospho-L-tyrosyl-[protein] + ADP + H(+). In terms of biological role, protein tyrosine kinase that is part of several cell surface receptor complexes, but that apparently needs a coreceptor for ligand binding. Essential component of a neuregulin-receptor complex, although neuregulins do not interact with it alone. GP30 is a potential ligand for this receptor. Regulates outgrowth and stabilization of peripheral microtubules (MTs). Upon ERBB2 activation, the MEMO1-RHOA-DIAPH1 signaling pathway elicits the phosphorylation and thus the inhibition of GSK3B at cell membrane. This prevents the phosphorylation of APC and CLASP2, allowing its association with the cell membrane. In turn, membrane-bound APC allows the localization of MACF1 to the cell membrane, which is required for microtubule capture and stabilization. Functionally, in the nucleus is involved in transcriptional regulation. Associates with the 5'-TCAAATTC-3' sequence in the PTGS2/COX-2 promoter and activates its transcription. Implicated in transcriptional activation of CDKN1A; the function involves STAT3 and SRC. Involved in the transcription of rRNA genes by RNA Pol I and enhances protein synthesis and cell growth. This chain is Receptor tyrosine-protein kinase erbB-2 (ERBB2), found in Mesocricetus auratus (Golden hamster).